The following is an 88-amino-acid chain: U-scoloptoxin(01)-Tl1a (88 aa).

An N-terminal signal peptide occupies residues M1 to A16. One can recognise a Chitin-binding type-2 domain in the interval G25–R81. C58 and C71 form a disulfide bridge.

This sequence belongs to the scoloptoxin-01 family. Post-translationally, contains 3 disulfide bonds. In terms of tissue distribution, expressed by the venom gland.

It is found in the secreted. The protein is U-scoloptoxin(01)-Tl1a of Thereuopoda longicornis (Long-legged centipede).